A 395-amino-acid chain; its full sequence is MVDTCFLSRGLTTLAGLLLLPFGSLAASQIEDQAEQFFRSGHTNNWAVLVCTSRFWFNYRHVANTLSVYRSVKRLGIPDSHIVLMLADDMACNPRNPKPATVYSHKNMELNVYGDDVEVDYRSYEVTVENFLRVLTGRIPSSTPRSKRLLSDDRSNILIYMTGHGGNGFLKFQDSEEITNIELADAFEQMWQKRRYNELLFIIDTCQGASMYERFYSPNIMALASSQVGEDSLSHQPDPAVGVHLMDRYTFYVLEFLEEINPASQTNMNDLFQVCPRSLCVSTPGHRTDLFQRDPKNVLITDFFGSVRKVEITTETISLQPDSGVVESSYKKDQMVEELMEPLKYAEQLPVAQIIHQKPKLKDWHPPGGFILGLWALIIMVFFKTYGIKHMKFIF.

The N-terminal stretch at 1-27 (MVDTCFLSRGLTTLAGLLLLPFGSLAA) is a signal peptide. At 28–368 (SQIEDQAEQF…PKLKDWHPPG (341 aa)) the chain is on the lumenal side. Ca(2+) is bound by residues D79, I82, E118, and D120. Residue H164 is the Proton donor of the active site. The Nucleophile; acyl-thioester intermediate role is filled by C206. C206, S232, and S234 together coordinate a protein. The segment at 231–236 (DSLSHQ) is autoinhibitory loop. Cysteines 275 and 280 form a disulfide. Residues 369-385 (GFILGLWALIIMVFFKT) traverse the membrane as a helical segment. The Cytoplasmic portion of the chain corresponds to 386–395 (YGIKHMKFIF).

It belongs to the peptidase C13 family. In terms of assembly, heteropentamer. Part of the GPI-anchor transamidase complex, consisting of PIGK, PIGT, PIGS, PIGU and GAA1. Interacts with GPAA1. Interacts with PIGT; this interaction, via a disulfide link, stabilizes the expression of GAA1 and PIGK and links them to PIGS. The disulfide bond between PIGK/GPI8 and PIGT is important for normal enzyme activity.

Its subcellular location is the endoplasmic reticulum membrane. It functions in the pathway glycolipid biosynthesis; glycosylphosphatidylinositol-anchor biosynthesis. With respect to regulation, in the absence of proproteins substrates, exists in an inactive state with a disrupted catalytic site by an autoinhibitory loop. The binding of proprotein substrates, particularly the CSP region, to GPI-T triggers concerted conformational changes that alleviate the inhibition by the autoinhibitory loop. Meanwhile, proprotein residues near the omega- site induce the formation of a catalytic cleft for catalysis, following which the products are released and GPI-T reverts to the inactive state. Functionally, catalytic subunit of the glycosylphosphatidylinositol-anchor (GPI-anchor) transamidase (GPI-T) complex that catalyzes the formation of the linkage between a proprotein and a GPI-anchor and participates in GPI anchored protein biosynthesis. Recognizes diverse proproteins at a C-terminal signal peptide (CSP) region that lacks consensus sequence and replaces it with a GPI-anchor via a transamidation reaction. Transamidation catalysis reaction follows a two-phase mechanism. In the acyl-enzyme phase, the carbonyl group of the proproteins's omega-site undergoes a nucleophilic attack forming an enzyme-substrate thioester bond. Followed by a general acid catalysis that allows CSP releasing, regenerating the carbonyl, and forming the acyl-enzyme intermediate. In the GPI-anchor attachment phase, the amino group of the GPI-anchor's ethanolamine phosphate, the one on third mannose (EtNP3), mediates a nucleophilic attack on the carbonyl of the acyl-enzyme intermediate, replacing the CSP, allowing GPI-anchor attachment to the omega-residue, therefore forming the product and freeing the enzyme. In Bos taurus (Bovine), this protein is GPI-anchor transamidase.